Here is a 197-residue protein sequence, read N- to C-terminus: Allatostatins (197 aa).

The first 27 residues, 1 to 27 (MRSRTSVLTSSLAFLYFFGIVGRSALA), serve as a signal peptide directing secretion. The propeptide occupies 28 to 56 (MEETPASSMNLQHYNNMLNPMVFDDTMPE). Ile76 carries the isoleucine amide modification. Positions 80–86 (WIDTNDN) are excised as a propeptide. Residues Leu96, Leu106, Leu154, and Leu184 each carry the leucine amide modification. Positions 161–197 (YSGGQPLGSKRPNDMLSQRYHFGLGKRMSEDEEESSQ) are disordered. A propeptide spanning residues 188 to 197 (MSEDEEESSQ) is cleaved from the precursor.

This sequence belongs to the allatostatin family.

The protein localises to the secreted. In terms of biological role, neuropeptides. The polypeptide is Allatostatins (Apis mellifera (Honeybee)).